Consider the following 104-residue polypeptide: Integration host factor subunit beta (104 aa).

The protein belongs to the bacterial histone-like protein family. In terms of assembly, heterodimer of an alpha and a beta chain.

Functionally, this protein is one of the two subunits of integration host factor, a specific DNA-binding protein that functions in genetic recombination as well as in transcriptional and translational control. The polypeptide is Integration host factor subunit beta (Xylella fastidiosa (strain M23)).